A 795-amino-acid chain; its full sequence is MSQDRKPIVGSFHFVCALALIVGSMTPFSNELESMVDYSNRNLTHVPKDLPPRTKALSLSQNSISELRMPDISFLSELRVLRLSHNRIRSLDFHVFLFNQDLEYLDVSHNRLQNISCCPMASLRHLDLSFNDFDVLPVCKEFGNLTKLTFLGLSAAKFRQLDLLPVAHLHLSCILLDLVSYHIKGGETESLQIPNTTVLHLVFHPNSLFSVQVNMSVNALGHLQLSNIKLNDENCQRLMTFLSELTRGPTLLNVTLQHIETTWKCSVKLFQFFWPRPVEYLNIYNLTITERIDREEFTYSETALKSLMIEHVKNQVFLFSKEALYSVFAEMNIKMLSISDTPFIHMVCPPSPSSFTFLNFTQNVFTDSVFQGCSTLKRLQTLILQRNGLKNFFKVALMTKNMSSLETLDVSLNSLNSHAYDRTCAWAESILVLNLSSNMLTGSVFRCLPPKVKVLDLHNNRIMSIPKDVTHLQALQELNVASNSLTDLPGCGAFSSLSVLVIDHNSVSHPSEDFFQSCQNIRSLTAGNNPFQCTCELRDFVKNIGWVAREVVEGWPDSYRCDYPESSKGTALRDFHMSPLSCDTVLLTVTIGATMLVLAVTGAFLCLYFDLPWYVRMLCQWTQTRHRARHIPLEELQRNLQFHAFVSYSEHDSAWVKNELLPNLEKDDIRVCLHERNFVPGKSIVENIINFIEKSYKAIFVLSPHFIQSEWCHYELYFAHHNLFHEGSDNLILILLEPILQNNIPSRYHKLRALMAQRTYLEWPTEKGKRGLFWANLRASFIMKLALVNEDDVKT.

Positions 1–27 (MSQDRKPIVGSFHFVCALALIVGSMTP) are cleaved as a signal peptide. The Extracellular segment spans residues 28–584 (FSNELESMVD…FHMSPLSCDT (557 aa)). Asparagine 42 carries an N-linked (GlcNAc...) asparagine glycan. 19 LRR repeats span residues 54–77 (TKAL…FLSE), 78–101 (LRVL…FNQD), 102–125 (LEYL…SLRH), 126–150 (LDLS…KLTF), 151–175 (LGLS…SCIL), 176–199 (LDLV…TTVL), 200–223 (HLVF…LGHL), 224–250 (QLSN…RGPT), 251–278 (LLNV…PRPV), 279–308 (EYLN…KSLM), 309–337 (IEHV…KMLS), 338–361 (ISDT…LNFT), 362–388 (QNVF…QRNG), 389–414 (LKNF…SLNS), 415–437 (LNSH…NLSS), 438–457 (NMLT…VLDL), 458–478 (HNNR…LQEL), 479–500 (NVAS…LSVL), and 501–524 (VIDH…IRSL). N-linked (GlcNAc...) asparagine glycosylation is present at asparagine 114. Cysteine 117 and cysteine 139 are joined by a disulfide. An N-linked (GlcNAc...) asparagine glycan is attached at asparagine 144. N-linked (GlcNAc...) asparagine glycans are attached at residues asparagine 195 and asparagine 214. An intrachain disulfide couples cysteine 235 to cysteine 265. N-linked (GlcNAc...) asparagine glycosylation is found at asparagine 253 and asparagine 285. The cysteines at positions 348 and 373 are disulfide-linked. The N-linked (GlcNAc...) asparagine glycan is linked to asparagine 359. N-linked (GlcNAc...) asparagine glycosylation is found at asparagine 401 and asparagine 434. An intrachain disulfide couples cysteine 424 to cysteine 447. The 52-residue stretch at 525–576 (TAGNNPFQCTCELRDFVKNIGWVAREVVEGWPDSYRCDYPESSKGTALRDFH) folds into the LRRCT domain. Residues 585-605 (VLLTVTIGATMLVLAVTGAFL) form a helical membrane-spanning segment. Topologically, residues 606-795 (CLYFDLPWYV…ALVNEDDVKT (190 aa)) are cytoplasmic. The TIR domain maps to 640-781 (LQFHAFVSYS…LFWANLRASF (142 aa)).

It belongs to the Toll-like receptor family. Homodimer (via cytoplasmic TIR domain). Heterodimer with TLR2 via their respective extracellular domains. Binds MYD88 via their respective TIR domains. Interacts with CD36, following CD36 stimulation by oxLDL or amyloid-beta 42, and forms a heterodimer with TLR4. The trimeric complex is internalized and triggers inflammatory response. LYN kinase activity facilitates TLR4:TLR6 heterodimerization and signal initiation. The heterodimer TLR2:TLR6 interacts with CD14 and CD36 in response to triacylated lipopeptides. In terms of tissue distribution, detected in thymus, spleen, ovary and lung. Expressed in macrohpages.

The protein localises to the cell membrane. It is found in the cytoplasmic vesicle. Its subcellular location is the phagosome membrane. The protein resides in the membrane raft. It localises to the golgi apparatus. In terms of biological role, participates in the innate immune response to Gram-positive bacteria and fungi. Specifically recognizes diacylated and, to a lesser extent, triacylated lipopeptides. In response to diacylated lipopeptides, forms the activation cluster TLR2:TLR6:CD14:CD36, this cluster triggers signaling from the cell surface and subsequently is targeted to the Golgi in a lipid-raft dependent pathway. Acts via MYD88 and TRAF6, leading to NF-kappa-B activation, cytokine secretion and the inflammatory response. Recognizes mycoplasmal macrophage-activating lipopeptide-2kD (MALP-2), soluble tuberculosis factor (STF), phenol-soluble modulin (PSM) and B.burgdorferi outer surface protein A lipoprotein (OspA-L) cooperatively with TLR2. In complex with TLR4, promotes sterile inflammation in monocytes/macrophages in response to oxidized low-density lipoprotein (oxLDL) or amyloid-beta 42. In this context, the initial signal is provided by oxLDL- or amyloid-beta 42-binding to CD36. This event induces the formation of a heterodimer of TLR4 and TLR6, which is rapidly internalized and triggers inflammatory response, leading to the NF-kappa-B-dependent production of CXCL1, CXCL2 and CCL9 cytokines, via MYD88 signaling pathway, and CCL5 cytokine, via TICAM1 signaling pathway, as well as IL1B secretion. The sequence is that of Toll-like receptor 6 (Tlr6) from Mus musculus (Mouse).